The chain runs to 497 residues: Glycerol kinase (497 aa).

Threonine 12 lines the ADP pocket. Residues threonine 12, threonine 13, and serine 14 each contribute to the ATP site. Threonine 12 serves as a coordination point for sn-glycerol 3-phosphate. Residue arginine 16 coordinates ADP. Positions 82, 83, 134, and 243 each coordinate sn-glycerol 3-phosphate. Positions 82, 83, 134, 243, and 244 each coordinate glycerol. Residues threonine 265 and glycine 308 each coordinate ADP. ATP contacts are provided by threonine 265, glycine 308, glutamine 312, and glycine 409. ADP is bound by residues glycine 409 and asparagine 413.

This sequence belongs to the FGGY kinase family. In terms of assembly, homotetramer and homodimer (in equilibrium).

The catalysed reaction is glycerol + ATP = sn-glycerol 3-phosphate + ADP + H(+). It functions in the pathway polyol metabolism; glycerol degradation via glycerol kinase pathway; sn-glycerol 3-phosphate from glycerol: step 1/1. Activated by phosphorylation and inhibited by fructose 1,6-bisphosphate (FBP). In terms of biological role, key enzyme in the regulation of glycerol uptake and metabolism. Catalyzes the phosphorylation of glycerol to yield sn-glycerol 3-phosphate. This Thermoanaerobacter sp. (strain X514) protein is Glycerol kinase.